The following is a 326-amino-acid chain: Tetraacyldisaccharide 4'-kinase (326 aa).

Position 52-59 (52-59) interacts with ATP; sequence TLGGAGKT.

It belongs to the LpxK family.

The catalysed reaction is a lipid A disaccharide + ATP = a lipid IVA + ADP + H(+). It participates in glycolipid biosynthesis; lipid IV(A) biosynthesis; lipid IV(A) from (3R)-3-hydroxytetradecanoyl-[acyl-carrier-protein] and UDP-N-acetyl-alpha-D-glucosamine: step 6/6. Transfers the gamma-phosphate of ATP to the 4'-position of a tetraacyldisaccharide 1-phosphate intermediate (termed DS-1-P) to form tetraacyldisaccharide 1,4'-bis-phosphate (lipid IVA). The sequence is that of Tetraacyldisaccharide 4'-kinase from Methylobacterium radiotolerans (strain ATCC 27329 / DSM 1819 / JCM 2831 / NBRC 15690 / NCIMB 10815 / 0-1).